A 405-amino-acid polypeptide reads, in one-letter code: Glucan 1,3-beta-glucosidase A (405 aa).

Positions 1–14 (MLPLLLCIVPYCWS) are cleaved as a signal peptide. The active-site Proton donor is the E199. 2 disulfide bridges follow: C280–C405 and C306–C332. E298 acts as the Nucleophile in catalysis.

Belongs to the glycosyl hydrolase 5 (cellulase A) family. As to quaternary structure, monomer. Mn(2+) serves as cofactor.

Its subcellular location is the secreted. The catalysed reaction is Successive hydrolysis of beta-D-glucose units from the non-reducing ends of (1-&gt;3)-beta-D-glucans, releasing alpha-glucose.. Beta-glucanases participate in the metabolism of beta-glucan, the main structural component of the cell wall. It could also function biosynthetically as a transglycosylase. This chain is Glucan 1,3-beta-glucosidase A (exgA), found in Aspergillus oryzae (strain ATCC 42149 / RIB 40) (Yellow koji mold).